The following is a 350-amino-acid chain: GTPase Obg (350 aa).

The Obg domain occupies 1–159; the sequence is MKLVDEAEIL…RLLKLELRLL (159 aa). The segment at 127–146 is disordered; it reads NMHFKSSVNRAPRQSTTGEE. The span at 130–143 shows a compositional bias: polar residues; it reads FKSSVNRAPRQSTT. The 178-residue stretch at 160–337 folds into the OBG-type G domain; that stretch reads ADVGLLGFPN…IMKDVMAFFD (178 aa). Residues 166 to 173, 191 to 195, 213 to 216, 287 to 290, and 318 to 320 contribute to the GTP site; these read GFPNAGKS, FTTLY, DVPG, NKAD, and SAL. Positions 173 and 193 each coordinate Mg(2+).

Belongs to the TRAFAC class OBG-HflX-like GTPase superfamily. OBG GTPase family. In terms of assembly, monomer. Mg(2+) is required as a cofactor.

The protein localises to the cytoplasm. Functionally, an essential GTPase which binds GTP, GDP and possibly (p)ppGpp with moderate affinity, with high nucleotide exchange rates and a fairly low GTP hydrolysis rate. Plays a role in control of the cell cycle, stress response, ribosome biogenesis and in those bacteria that undergo differentiation, in morphogenesis control. This is GTPase Obg from Xanthomonas oryzae pv. oryzae (strain MAFF 311018).